We begin with the raw amino-acid sequence, 616 residues long: Dihydroxy-acid dehydratase (616 aa).

Position 81 (aspartate 81) interacts with Mg(2+). Residue cysteine 122 coordinates [2Fe-2S] cluster. Mg(2+) is bound by residues aspartate 123 and lysine 124. Lysine 124 is subject to N6-carboxylysine. Residue cysteine 195 participates in [2Fe-2S] cluster binding. Residue glutamate 491 participates in Mg(2+) binding. The active-site Proton acceptor is the serine 517.

Belongs to the IlvD/Edd family. As to quaternary structure, homodimer. Requires [2Fe-2S] cluster as cofactor. It depends on Mg(2+) as a cofactor.

The enzyme catalyses (2R)-2,3-dihydroxy-3-methylbutanoate = 3-methyl-2-oxobutanoate + H2O. The catalysed reaction is (2R,3R)-2,3-dihydroxy-3-methylpentanoate = (S)-3-methyl-2-oxopentanoate + H2O. It functions in the pathway amino-acid biosynthesis; L-isoleucine biosynthesis; L-isoleucine from 2-oxobutanoate: step 3/4. It participates in amino-acid biosynthesis; L-valine biosynthesis; L-valine from pyruvate: step 3/4. In terms of biological role, functions in the biosynthesis of branched-chain amino acids. Catalyzes the dehydration of (2R,3R)-2,3-dihydroxy-3-methylpentanoate (2,3-dihydroxy-3-methylvalerate) into 2-oxo-3-methylpentanoate (2-oxo-3-methylvalerate) and of (2R)-2,3-dihydroxy-3-methylbutanoate (2,3-dihydroxyisovalerate) into 2-oxo-3-methylbutanoate (2-oxoisovalerate), the penultimate precursor to L-isoleucine and L-valine, respectively. In Tolumonas auensis (strain DSM 9187 / NBRC 110442 / TA 4), this protein is Dihydroxy-acid dehydratase.